The following is a 439-amino-acid chain: GTPase Obg (439 aa).

One can recognise an Obg domain in the interval 1 to 159 (MAFVDQAEIE…RKLKLELKVL (159 aa)). The OBG-type G domain maps to 160-336 (ADVGLVGFPS…LMRLTADLLA (177 aa)). GTP contacts are provided by residues 166 to 173 (GFPSAGKS), 191 to 195 (FTTLS), 213 to 216 (DLPG), 283 to 286 (TKMD), and 317 to 319 (SAL). Positions 173 and 193 each coordinate Mg(2+). An OCT domain is found at 358 to 439 (DFKPEQHNFT…NSDFVFEFSD (82 aa)).

The protein belongs to the TRAFAC class OBG-HflX-like GTPase superfamily. OBG GTPase family. As to quaternary structure, monomer. It depends on Mg(2+) as a cofactor.

The protein localises to the cytoplasm. An essential GTPase which binds GTP, GDP and possibly (p)ppGpp with moderate affinity, with high nucleotide exchange rates and a fairly low GTP hydrolysis rate. Plays a role in control of the cell cycle, stress response, ribosome biogenesis and in those bacteria that undergo differentiation, in morphogenesis control. The polypeptide is GTPase Obg (Leuconostoc citreum (strain KM20)).